The sequence spans 665 residues: Coiled-coil domain-containing protein 138 (665 aa).

Position 48 is a phosphothreonine (Thr-48). Ser-49 bears the Phosphoserine mark. The stretch at 198–323 forms a coiled coil; that stretch reads QQKFAEELQK…YEFMTIQRLK (126 aa). Position 469 is a phosphoserine (Ser-469).

In Macaca fascicularis (Crab-eating macaque), this protein is Coiled-coil domain-containing protein 138 (CCDC138).